The sequence spans 545 residues: CTP synthase (545 aa).

The tract at residues 1 to 266 is amidoligase domain; that stretch reads MTTNYIFVTG…DDYICKRFSL (266 aa). S14 is a CTP binding site. S14 serves as a coordination point for UTP. ATP contacts are provided by residues 15–20 and D72; that span reads SLGKGI. The Mg(2+) site is built by D72 and E140. CTP contacts are provided by residues 147-149, 187-192, and K223; these read DIE and KTKPTQ. Residues 187-192 and K223 each bind UTP; that span reads KTKPTQ. Residue 239–241 participates in ATP binding; that stretch reads KDV. Positions 291 to 542 constitute a Glutamine amidotransferase type-1 domain; sequence TIGMVGKYIE…VKAASEYQKR (252 aa). Residue G352 participates in L-glutamine binding. C379 serves as the catalytic Nucleophile; for glutamine hydrolysis. Residues 380–383, E403, and R470 contribute to the L-glutamine site; that span reads LGMQ. Active-site residues include H515 and E517.

The protein belongs to the CTP synthase family. In terms of assembly, homotetramer.

It catalyses the reaction UTP + L-glutamine + ATP + H2O = CTP + L-glutamate + ADP + phosphate + 2 H(+). The catalysed reaction is L-glutamine + H2O = L-glutamate + NH4(+). It carries out the reaction UTP + NH4(+) + ATP = CTP + ADP + phosphate + 2 H(+). Its pathway is pyrimidine metabolism; CTP biosynthesis via de novo pathway; CTP from UDP: step 2/2. Allosterically activated by GTP, when glutamine is the substrate; GTP has no effect on the reaction when ammonia is the substrate. The allosteric effector GTP functions by stabilizing the protein conformation that binds the tetrahedral intermediate(s) formed during glutamine hydrolysis. Inhibited by the product CTP, via allosteric rather than competitive inhibition. Catalyzes the ATP-dependent amination of UTP to CTP with either L-glutamine or ammonia as the source of nitrogen. Regulates intracellular CTP levels through interactions with the four ribonucleotide triphosphates. The polypeptide is CTP synthase (Citrobacter koseri (strain ATCC BAA-895 / CDC 4225-83 / SGSC4696)).